A 247-amino-acid polypeptide reads, in one-letter code: Histone acetyltransferase MCC1 (247 aa).

The 174-residue stretch at 25 to 198 (IHYRPINPND…DAFLFVYFIN (174 aa)) folds into the N-acetyltransferase domain.

It belongs to the acetyltransferase family.

The catalysed reaction is L-lysyl-[protein] + acetyl-CoA = N(6)-acetyl-L-lysyl-[protein] + CoA + H(+). Functionally, histone acetyltransferase that probably regulates acetylation status of histone H3 during meiosis. Histone acetylation may influence recombination and chromosome segregation. The chain is Histone acetyltransferase MCC1 (MCC1) from Arabidopsis thaliana (Mouse-ear cress).